A 213-amino-acid polypeptide reads, in one-letter code: Peptide methionine sulfoxide reductase MsrA (213 aa).

The active site involves Cys52.

Belongs to the MsrA Met sulfoxide reductase family.

It carries out the reaction L-methionyl-[protein] + [thioredoxin]-disulfide + H2O = L-methionyl-(S)-S-oxide-[protein] + [thioredoxin]-dithiol. The catalysed reaction is [thioredoxin]-disulfide + L-methionine + H2O = L-methionine (S)-S-oxide + [thioredoxin]-dithiol. Functionally, has an important function as a repair enzyme for proteins that have been inactivated by oxidation. Catalyzes the reversible oxidation-reduction of methionine sulfoxide in proteins to methionine. The polypeptide is Peptide methionine sulfoxide reductase MsrA (Enterobacter sp. (strain 638)).